A 472-amino-acid chain; its full sequence is Protein translocase subunit SecD (472 aa).

The next 6 helical transmembrane spans lie at 7-27, 298-318, 326-345, 349-368, 392-414, and 432-452; these read LLLL…KLPL, LVAG…YYRL, SLMI…GVTL, GIAG…VLIF, AFSS…FWFG, and SLFT…LSLP.

It belongs to the SecD/SecF family. SecD subfamily. As to quaternary structure, forms a complex with SecF. Part of the essential Sec protein translocation apparatus which comprises SecA, SecYEG and auxiliary proteins SecDF. Other proteins may also be involved.

The protein localises to the cell inner membrane. Functionally, part of the Sec protein translocase complex. Interacts with the SecYEG preprotein conducting channel. SecDF uses the proton motive force (PMF) to complete protein translocation after the ATP-dependent function of SecA. Its function is as follows. Probably participates in protein translocation into and across both the cytoplasmic and thylakoid membranes in cyanobacterial cells. The protein is Protein translocase subunit SecD of Synechocystis sp. (strain ATCC 27184 / PCC 6803 / Kazusa).